The primary structure comprises 396 residues: Phosphoglycerate kinase (396 aa).

Substrate contacts are provided by residues 19–21 (DFN), Arg-34, 57–60 (HLGK), Arg-116, and Arg-153. ATP contacts are provided by residues Lys-204, Glu-324, and 351–354 (GGDT).

It belongs to the phosphoglycerate kinase family. In terms of assembly, monomer.

It is found in the cytoplasm. The catalysed reaction is (2R)-3-phosphoglycerate + ATP = (2R)-3-phospho-glyceroyl phosphate + ADP. It functions in the pathway carbohydrate degradation; glycolysis; pyruvate from D-glyceraldehyde 3-phosphate: step 2/5. This is Phosphoglycerate kinase from Maridesulfovibrio salexigens (strain ATCC 14822 / DSM 2638 / NCIMB 8403 / VKM B-1763) (Desulfovibrio salexigens).